Consider the following 344-residue polypeptide: Inositol 2-dehydrogenase/D-chiro-inositol 3-dehydrogenase (344 aa).

Belongs to the Gfo/Idh/MocA family. Homotetramer.

The enzyme catalyses myo-inositol + NAD(+) = scyllo-inosose + NADH + H(+). It carries out the reaction 1D-chiro-inositol + NAD(+) = scyllo-inosine + NADH + H(+). Its pathway is polyol metabolism; myo-inositol degradation into acetyl-CoA; acetyl-CoA from myo-inositol: step 1/7. Involved in the oxidation of myo-inositol (MI) and D-chiro-inositol (DCI) to 2-keto-myo-inositol (2KMI or 2-inosose) and 1-keto-D-chiro-inositol (1KDCI), respectively. This chain is Inositol 2-dehydrogenase/D-chiro-inositol 3-dehydrogenase, found in Bacillus licheniformis (strain ATCC 14580 / DSM 13 / JCM 2505 / CCUG 7422 / NBRC 12200 / NCIMB 9375 / NCTC 10341 / NRRL NRS-1264 / Gibson 46).